An 87-amino-acid polypeptide reads, in one-letter code: Protein U62 (87 aa).

Belongs to the herpesviridae UL91 family.

The chain is Protein U62 (U62) from Human herpesvirus 6B (strain Z29) (HHV-6 variant B).